Consider the following 191-residue polypeptide: Protein LURP-one-related 6 (191 aa).

It belongs to the LOR family.

Might be related to the phospholipid scramblase and tubby-like superfamily of membrane tethered transcription factors. In Arabidopsis thaliana (Mouse-ear cress), this protein is Protein LURP-one-related 6.